A 196-amino-acid chain; its full sequence is GTP cyclohydrolase 1 (196 aa).

Zn(2+) contacts are provided by cysteine 86, histidine 89, and cysteine 157.

This sequence belongs to the GTP cyclohydrolase I family. In terms of assembly, toroid-shaped homodecamer, composed of two pentamers of five dimers.

It carries out the reaction GTP + H2O = 7,8-dihydroneopterin 3'-triphosphate + formate + H(+). It functions in the pathway cofactor biosynthesis; 7,8-dihydroneopterin triphosphate biosynthesis; 7,8-dihydroneopterin triphosphate from GTP: step 1/1. This Parabacteroides distasonis (strain ATCC 8503 / DSM 20701 / CIP 104284 / JCM 5825 / NCTC 11152) protein is GTP cyclohydrolase 1.